Here is an 86-residue protein sequence, read N- to C-terminus: Sugar transporter SemiSWEET (86 aa).

Transmembrane regions (helical) follow at residues 3–23, 37–57, and 61–81; these read PFLIKLIGFAAATCTTVAYAP, ISLGMFLVMVLGLALWLIYGL, and DAPLIASNAVTMLLAGGILVM. In terms of domain architecture, PQ-loop spans 6–63; sequence IKLIGFAAATCTTVAYAPQFIKVLKTRSARDISLGMFLVMVLGLALWLIYGLLSGDAP.

Homodimer. Homooligomer.

It localises to the cell membrane. Mediates sucrose transmembrane transport down a concentration gradient. This is Sugar transporter SemiSWEET from Bradyrhizobium diazoefficiens (strain JCM 10833 / BCRC 13528 / IAM 13628 / NBRC 14792 / USDA 110).